The following is a 992-amino-acid chain: Epstein-Barr nuclear antigen 6 (992 aa).

The segment at 1 to 70 (MESFEGQGDS…SRGDENRGWM (70 aa)) is disordered. Residues 12–31 (QSPDNERGDNVQTTGEHDQD) show a composition bias toward basic and acidic residues. An interaction with host PIM1 region spans residues 130–159 (LILDSGLDTQHILCFVMAARQRLQDIRRGP). Disordered stretches follow at residues 355-905 (ATGG…DSMA), 931-954 (PLDI…PARC), and 967-992 (DNSE…SELD). The span at 381 to 391 (VELESSDDELP) shows a compositional bias: acidic residues. Over residues 445–461 (AQSTPERPGPSEQSSVT) the composition is skewed to polar residues. Over residues 479-495 (QPPPVPKPVPVKPTPPP) the composition is skewed to pro residues. Over residues 506–520 (YDDDVIEVIDVETTE) the composition is skewed to acidic residues. The stretch at 551–555 (PPTVS) is one 1-1; approximate repeat. The 12 X 5 AA approximate tandem repeats of P-P-A-A-G stretch occupies residues 551–610 (PPTVSPSDTGPPAVGPPAAGPPAAGPPAAGPPAAGPPAAGPPAAGPRILAPLSAGPPAAG). The 2-1; approximate repeat unit spans residues 556–560 (PSDTG). The 3-1; approximate repeat unit spans residues 561–565 (PPAVG). The segment covering 563–594 (AVGPPAAGPPAAGPPAAGPPAAGPPAAGPPAA) has biased composition (pro residues). A run of 6 repeats spans residues 566–570 (PPAAG), 571–575 (PPAAG), 576–580 (PPAAG), 581–585 (PPAAG), 586–590 (PPAAG), and 591–595 (PPAAG). Positions 595 to 611 (GPRILAPLSAGPPAAGP) are enriched in low complexity. The 10-1; approximate repeat unit spans residues 596–600 (PRILA). An 11-1; approximate repeat occupies 601–605 (PLSAG). The stretch at 606 to 610 (PPAAG) is one 12-1 repeat. 2 stretches are compositionally biased toward polar residues: residues 659-676 (TQMQ…TQPT) and 700-714 (IESS…TQPI). The segment covering 715 to 724 (SHEEQPRYED) has biased composition (basic and acidic residues). 2 stretches are compositionally biased toward low complexity: residues 738–764 (AAQP…QGYQ) and 772–781 (PYQGYQEPPA). A run of 3 repeats spans residues 741-753 (PAPQ…YQEP), 754-766 (PAPQ…YQEP), and 767-779 (PPPQ…YQEP). Positions 741 to 779 (PAPQAPYQGYQEPPAPQAPYQGYQEPPPPQAPYQGYQEP) are 3 X 13 AA tandem repeats of P-[AP]-P-Q-A-P-Y-Q-G-Y-Q-E-P. Polar residues predominate over residues 845–857 (DQVSQFPHLQSET). The span at 859-881 (PPRLQLSLVPLVSSSAPSWSSPQ) shows a compositional bias: low complexity. Positions 882–899 (PRAPIRPIPTRFPPPPMP) are enriched in pro residues.

Belongs to the herpesviridae EBNA-6 family. In terms of assembly, interacts with host CTPB1; this interaction leads to gene repression, but also seems to interfere with the repressive function of CtBP pre-bound to DNA, leading to EBNA6 mediated up-regulation of many host genes. Interacts with host MYC; this interaction enhances MYC stability. Interacts (via N-terminus) with host RBPJ. Interacts (via N-terminus) with host histone H2AX; this interaction facilitates H2AX proteasomal degradation. Interacts with host TP73; this interaction inhibits TP73-mediated apoptotic pathway. Interacts (via N-terminus) with host PIM1; this interaction upregulates and stabilizes PIM1 and induces cell proliferation by inhibiting the growth suppressive properties of p21.

The protein localises to the host nucleus. It localises to the host nucleus matrix. Plays an essential role for the activation and immortalization of human B-cells. Represses transcription of viral promoters TP1 and Cp through interaction with host RBPJ, and inhibits EBNA2-mediated activation of these promoters. Targets host chromatin through interactions with host transcription factors, especially RBPJ and IRF4. Alternatively, EBNA6 also regulates the transcription of the EBV oncogene LMP1 in a cell cycle-dependent manner. Modulates the activity of several host proteins involved in cell cycle regulation including host cyclin A, MYC, RB, p21 and p27 mainly through binding to the host SCF(SKP2) complex. Inhibits the promoter of host H2AX and targets H2AX to proteasomal degradation in order to promote latency and cell proliferation. Upregulates host PIM1 expression and stabilization. Potentiates PIM1 to promote cell proliferation by inhibiting the growth suppressive properties of p21. This chain is Epstein-Barr nuclear antigen 6 (EBNA6), found in Epstein-Barr virus (strain B95-8) (HHV-4).